We begin with the raw amino-acid sequence, 282 residues long: Bifunctional protein FolD (282 aa).

NADP(+)-binding positions include 165–167 and isoleucine 231; that span reads GAS.

The protein belongs to the tetrahydrofolate dehydrogenase/cyclohydrolase family. In terms of assembly, homodimer.

It catalyses the reaction (6R)-5,10-methylene-5,6,7,8-tetrahydrofolate + NADP(+) = (6R)-5,10-methenyltetrahydrofolate + NADPH. The enzyme catalyses (6R)-5,10-methenyltetrahydrofolate + H2O = (6R)-10-formyltetrahydrofolate + H(+). It participates in one-carbon metabolism; tetrahydrofolate interconversion. Functionally, catalyzes the oxidation of 5,10-methylenetetrahydrofolate to 5,10-methenyltetrahydrofolate and then the hydrolysis of 5,10-methenyltetrahydrofolate to 10-formyltetrahydrofolate. The chain is Bifunctional protein FolD from Francisella philomiragia subsp. philomiragia (strain ATCC 25017 / CCUG 19701 / FSC 153 / O#319-036).